A 162-amino-acid chain; its full sequence is uncharacterized protein (162 aa).

Helical transmembrane passes span 28 to 50, 57 to 76, and 108 to 130; these read ALALALLPRSSLLWYLLFAVCFF, LLLLSLVLFGFVVPSFDPWL, and YNTMIAGGLVAGALCYLPCYALA.

The protein localises to the cell membrane. This is an uncharacterized protein from Treponema pallidum (strain Nichols).